A 747-amino-acid polypeptide reads, in one-letter code: NAD-dependent protein deacetylase sirtuin-1 (747 aa).

Positions 1 to 135 (MADEAALALQ…DDEGEEEEEA (135 aa)) are disordered. Ala-2 carries the N-acetylalanine modification. Residues 2 to 139 (ADEAALALQP…EEEEEAAAAA (138 aa)) form an interaction with CLOCK region. Positions 2-268 (ADEAALALQP…LTGAGVSVSC (267 aa)) are interaction with H1-4. Residues Ser-14 and Ser-26 each carry the phosphoserine modification. A Phosphoserine; by MAPK8 modification is found at Ser-27. The Nuclear localization signal motif lies at 32–39 (PLRKRPRR). Residue Ser-47 is modified to Phosphoserine; by MAPK8. The segment covering 61–100 (PAAARGCPGAAAAALWREAEAEAAAAGGEQEAQATAAAGE) has biased composition (low complexity). Residues 120–135 (LYDEDDDDEGEEEEEA) are compositionally biased toward acidic residues. Positions 138-145 (AAIGYRDN) match the Nuclear export signal motif. Residues 143–541 (RDNLLFGDEI…LHVSEDSSSP (399 aa)) are interaction with CCAR2. 4 positions are modified to phosphoserine: Ser-159, Ser-162, Ser-172, and Ser-173. Positions 223–230 (IVINILSE) match the Nuclear localization signal motif. A Deacetylase sirtuin-type domain is found at 236–496 (KRKDINTIED…NELCHRLGGE (261 aa)). At Lys-238 the chain carries N6-acetyllysine. The tract at residues 256-259 (IIVL) is required for interaction with the sumoylated form of CCAR2. NAD(+)-binding positions include 261 to 280 (GAGVSVSCGIPDFRSRDGIY) and 345 to 348 (QNID). The active-site Proton acceptor is His-363. Residues Cys-371 and Cys-374 each contribute to the Zn(2+) site. Position 377 is an N6-acetyllysine (Lys-377). The Zn(2+) site is built by Cys-395 and Cys-398. Residues Cys-395 and Cys-398 each carry the S-nitrosocysteine modification. A Nuclear export signal motif is present at residues 425–431 (AMKYDKD). Lys-430 carries the N6-acetyllysine modification. NAD(+)-binding positions include 440 to 442 (GSS), 465 to 467 (NRE), and Cys-482. Lys-513 bears the N6-acetyllysine mark. Disordered regions lie at residues 523–549 (YLSELPPTPLHVSEDSSSPERTSPPDS) and 562–587 (SNDDLDVSESKGCMEEKPQEVQTSRN). Thr-530 is modified (phosphothreonine; by DYRK1A, DYRK3 and MAPK8). Ser-535 carries the post-translational modification Phosphoserine. A compositionally biased stretch (polar residues) spans 537–549 (DSSSPERTSPPDS). The tract at residues 538–540 (SSS) is phosphorylated at one of three serine residues. Thr-544 is modified (phosphothreonine). Ser-545 carries the phosphoserine modification. Residues 569 to 580 (SESKGCMEEKPQ) are compositionally biased toward basic and acidic residues. Lys-610 is modified (N6-acetyllysine). A phosphoserine; by CaMK2 mark is found at Ser-659 and Ser-661. A disordered region spans residues 663 to 726 (DDVLSSSSCG…FGTDGDDQEA (64 aa)). Residues 666 to 677 (LSSSSCGSNSDS) are compositionally biased toward low complexity. Positions 687–707 (EPMEDESEIEEFYNGLEDEPD) are enriched in acidic residues. At Thr-719 the chain carries Phosphothreonine. Ser-747 is subject to Phosphoserine.

The protein belongs to the sirtuin family. Class I subfamily. In terms of assembly, interacts with XBP1 isoform 2. Found in a complex with PCAF and MYOD1. Interacts with FOXO1; the interaction deacetylates FOXO1, resulting in its nuclear retention and promotion of its transcriptional activity Component of the eNoSC complex, composed of SIRT1, SUV39H1 and RRP8. Interacts with HES1, HEY2 and PML. Interacts with RPS19BP1/AROS. Interacts with CCAR2 (via N-terminus); the interaction disrupts the interaction between SIRT1 and p53/TP53. Interacts with SETD7; the interaction induces the dissociation of SIRT1 from p53/TP53 and increases p53/TP53 activity. Interacts with MYCN, NR1I2, CREBZF, TSC2, TLE1, FOS, JUN, NR0B2, PPARG, NCOR, IRS1, IRS2 and NMNAT1. Interacts with HNF1A; the interaction occurs under nutrient restriction. Interacts with SUZ12; the interaction mediates the association with the PRC4 histone methylation complex which is specific as an association with PCR2 and PCR3 complex variants is not found. Interacts with BCL6; leads to a epigenetic repression of specific target genes. Interacts with CLOCK, BMAL1 and PER2. Interacts with PPARA; the interaction seems to be modulated by NAD(+) levels. Interacts with NR1H3 and this interaction is inhibited in the presence of CCAR2. Interacts with CHEK2. Interacts with p53/TP53. Exhibits a preferential interaction with sumoylated CCAR2 over its unmodified form. Interacts with PACS2. Interacts with SIRT7. Interacts with PUS7. Interacts with TULP3. Interacts with MORN3; the interaction enhances the ubiquitination of p53/TP53. As to quaternary structure, (Microbial infection) Interacts with HIV-1 Tat. Requires Zn(2+) as cofactor. In terms of processing, methylated on multiple lysine residues; methylation is enhanced after DNA damage and is dispensable for deacetylase activity toward p53/TP53. Post-translationally, phosphorylated. Phosphorylated by STK4/MST1, resulting in inhibition of SIRT1-mediated p53/TP53 deacetylation. Phosphorylation by MAPK8/JNK1 at Ser-27, Ser-47, and Thr-530 leads to increased nuclear localization and enzymatic activity. Phosphorylation at Thr-530 by DYRK1A and DYRK3 activates deacetylase activity and promotes cell survival. Phosphorylation by mammalian target of rapamycin complex 1 (mTORC1) at Ser-47 inhibits deacetylation activity. Phosphorylated by CaMK2, leading to increased p53/TP53 and NF-kappa-B p65/RELA deacetylation activity. Phosphorylation at Ser-27 implicating MAPK9 is linked to protein stability. There is some ambiguity for some phosphosites: Ser-159/Ser-162 and Thr-544/Ser-545. Proteolytically cleaved by cathepsin B upon TNF-alpha treatment to yield catalytic inactive but stable SirtT1 75 kDa fragment (75SirT1). In terms of processing, S-nitrosylated by GAPDH, leading to inhibit the NAD-dependent protein deacetylase activity. Post-translationally, acetylated at various Lys residues. Deacetylated via an autocatalytic mechanism. Autodeacetylation at Lys-238 promotes its protein deacetylase activity. Ubiquitinated; leading to degradation. Deubiquitinated by USP22; leading to stabilization. In terms of tissue distribution, widely expressed.

The protein localises to the nucleus. Its subcellular location is the PML body. It is found in the cytoplasm. It localises to the mitochondrion. The catalysed reaction is N(6)-acetyl-L-lysyl-[protein] + NAD(+) + H2O = 2''-O-acetyl-ADP-D-ribose + nicotinamide + L-lysyl-[protein]. The enzyme catalyses N(6)-propanoyl-L-lysyl-[protein] + NAD(+) + H2O = 3''-O-propanoyl-ADP-D-ribose + nicotinamide + L-lysyl-[protein]. It carries out the reaction N(6)-(2E)-butenoyl-L-lysyl-[protein] + NAD(+) + H2O = 2''-O-(2E)-but-2-enoyl-ADP-D-ribose + nicotinamide + L-lysyl-[protein]. It catalyses the reaction N(6)-[(S)-lactoyl]-L-lysyl-[protein] + NAD(+) + H2O = 2''-O-(S)-lactoyl-ADP-D-ribose + nicotinamide + L-lysyl-[protein]. With respect to regulation, inhibited by nicotinamide. Activated by resveratrol (3,5,4'-trihydroxy-trans-stilbene), butein (3,4,2',4'-tetrahydroxychalcone), piceatannol (3,5,3',4'-tetrahydroxy-trans-stilbene), Isoliquiritigenin (4,2',4'-trihydroxychalcone), fisetin (3,7,3',4'-tetrahydroxyflavone) and quercetin (3,5,7,3',4'-pentahydroxyflavone). MAPK8/JNK1 and RPS19BP1/AROS act as positive regulators of deacetylation activity. Negatively regulated by CCAR2. NAD-dependent protein deacetylase that links transcriptional regulation directly to intracellular energetics and participates in the coordination of several separated cellular functions such as cell cycle, response to DNA damage, metabolism, apoptosis and autophagy. Can modulate chromatin function through deacetylation of histones and can promote alterations in the methylation of histones and DNA, leading to transcriptional repression. Deacetylates a broad range of transcription factors and coregulators, thereby regulating target gene expression positively and negatively. Serves as a sensor of the cytosolic ratio of NAD(+)/NADH which is altered by glucose deprivation and metabolic changes associated with caloric restriction. Is essential in skeletal muscle cell differentiation and in response to low nutrients mediates the inhibitory effect on skeletal myoblast differentiation which also involves 5'-AMP-activated protein kinase (AMPK) and nicotinamide phosphoribosyltransferase (NAMPT). Component of the eNoSC (energy-dependent nucleolar silencing) complex, a complex that mediates silencing of rDNA in response to intracellular energy status and acts by recruiting histone-modifying enzymes. The eNoSC complex is able to sense the energy status of cell: upon glucose starvation, elevation of NAD(+)/NADP(+) ratio activates SIRT1, leading to histone H3 deacetylation followed by dimethylation of H3 at 'Lys-9' (H3K9me2) by SUV39H1 and the formation of silent chromatin in the rDNA locus. Deacetylates 'Lys-266' of SUV39H1, leading to its activation. Inhibits skeletal muscle differentiation by deacetylating PCAF and MYOD1. Deacetylates H2A and 'Lys-26' of H1-4. Deacetylates 'Lys-16' of histone H4 (in vitro). Involved in NR0B2/SHP corepression function through chromatin remodeling: Recruited to LRH1 target gene promoters by NR0B2/SHP thereby stimulating histone H3 and H4 deacetylation leading to transcriptional repression. Proposed to contribute to genomic integrity via positive regulation of telomere length; however, reports on localization to pericentromeric heterochromatin are conflicting. Proposed to play a role in constitutive heterochromatin (CH) formation and/or maintenance through regulation of the available pool of nuclear SUV39H1. Upon oxidative/metabolic stress decreases SUV39H1 degradation by inhibiting SUV39H1 polyubiquitination by MDM2. This increase in SUV39H1 levels enhances SUV39H1 turnover in CH, which in turn seems to accelerate renewal of the heterochromatin which correlates with greater genomic integrity during stress response. Deacetylates 'Lys-382' of p53/TP53 and impairs its ability to induce transcription-dependent proapoptotic program and modulate cell senescence. Deacetylates TAF1B and thereby represses rDNA transcription by the RNA polymerase I. Deacetylates MYC, promotes the association of MYC with MAX and decreases MYC stability leading to compromised transformational capability. Deacetylates FOXO3 in response to oxidative stress thereby increasing its ability to induce cell cycle arrest and resistance to oxidative stress but inhibiting FOXO3-mediated induction of apoptosis transcriptional activity; also leading to FOXO3 ubiquitination and protesomal degradation. Appears to have a similar effect on MLLT7/FOXO4 in regulation of transcriptional activity and apoptosis. Deacetylates DNMT1; thereby impairs DNMT1 methyltransferase-independent transcription repressor activity, modulates DNMT1 cell cycle regulatory function and DNMT1-mediated gene silencing. Deacetylates RELA/NF-kappa-B p65 thereby inhibiting its transactivating potential and augments apoptosis in response to TNF-alpha. Deacetylates HIF1A, KAT5/TIP60, RB1 and HIC1. Deacetylates FOXO1 resulting in its nuclear retention and enhancement of its transcriptional activity leading to increased gluconeogenesis in liver. Inhibits E2F1 transcriptional activity and apoptotic function, possibly by deacetylation. Involved in HES1- and HEY2-mediated transcriptional repression. In cooperation with MYCN seems to be involved in transcriptional repression of DUSP6/MAPK3 leading to MYCN stabilization by phosphorylation at 'Ser-62'. Deacetylates MEF2D. Required for antagonist-mediated transcription suppression of AR-dependent genes which may be linked to local deacetylation of histone H3. Represses HNF1A-mediated transcription. Required for the repression of ESRRG by CREBZF. Deacetylates NR1H3 and NR1H2 and deacetylation of NR1H3 at 'Lys-434' positively regulates transcription of NR1H3:RXR target genes, promotes NR1H3 proteasomal degradation and results in cholesterol efflux; a promoter clearing mechanism after reach round of transcription is proposed. Involved in lipid metabolism: deacetylates LPIN1, thereby inhibiting diacylglycerol synthesis. Implicated in regulation of adipogenesis and fat mobilization in white adipocytes by repression of PPARG which probably involves association with NCOR1 and SMRT/NCOR2. Deacetylates p300/EP300 and PRMT1. Deacetylates ACSS2 leading to its activation, and HMGCS1 deacetylation. Involved in liver and muscle metabolism. Through deacetylation and activation of PPARGC1A is required to activate fatty acid oxidation in skeletal muscle under low-glucose conditions and is involved in glucose homeostasis. Involved in regulation of PPARA and fatty acid beta-oxidation in liver. Involved in positive regulation of insulin secretion in pancreatic beta cells in response to glucose; the function seems to imply transcriptional repression of UCP2. Proposed to deacetylate IRS2 thereby facilitating its insulin-induced tyrosine phosphorylation. Deacetylates SREBF1 isoform SREBP-1C thereby decreasing its stability and transactivation in lipogenic gene expression. Involved in DNA damage response by repressing genes which are involved in DNA repair, such as XPC and TP73, deacetylating XRCC6/Ku70, and facilitating recruitment of additional factors to sites of damaged DNA, such as SIRT1-deacetylated NBN can recruit ATM to initiate DNA repair and SIRT1-deacetylated XPA interacts with RPA2. Also involved in DNA repair of DNA double-strand breaks by homologous recombination and specifically single-strand annealing independently of XRCC6/Ku70 and NBN. Promotes DNA double-strand breaks by mediating deacetylation of SIRT6. Transcriptional suppression of XPC probably involves an E2F4:RBL2 suppressor complex and protein kinase B (AKT) signaling. Transcriptional suppression of TP73 probably involves E2F4 and PCAF. Deacetylates WRN thereby regulating its helicase and exonuclease activities and regulates WRN nuclear translocation in response to DNA damage. Deacetylates APEX1 at 'Lys-6' and 'Lys-7' and stimulates cellular AP endonuclease activity by promoting the association of APEX1 to XRCC1. Catalyzes deacetylation of ERCC4/XPF, thereby impairing interaction with ERCC1 and nucleotide excision repair (NER). Increases p53/TP53-mediated transcription-independent apoptosis by blocking nuclear translocation of cytoplasmic p53/TP53 and probably redirecting it to mitochondria. Deacetylates XRCC6/Ku70 at 'Lys-539' and 'Lys-542' causing it to sequester BAX away from mitochondria thereby inhibiting stress-induced apoptosis. Is involved in autophagy, presumably by deacetylating ATG5, ATG7 and MAP1LC3B/ATG8. Deacetylates AKT1 which leads to enhanced binding of AKT1 and PDK1 to PIP3 and promotes their activation. Proposed to play role in regulation of STK11/LBK1-dependent AMPK signaling pathways implicated in cellular senescence which seems to involve the regulation of the acetylation status of STK11/LBK1. Can deacetylate STK11/LBK1 and thereby increase its activity, cytoplasmic localization and association with STRAD; however, the relevance of such activity in normal cells is unclear. In endothelial cells is shown to inhibit STK11/LBK1 activity and to promote its degradation. Deacetylates SMAD7 at 'Lys-64' and 'Lys-70' thereby promoting its degradation. Deacetylates CIITA and augments its MHC class II transactivation and contributes to its stability. Deacetylates MECOM/EVI1. Deacetylates PML at 'Lys-487' and this deacetylation promotes PML control of PER2 nuclear localization. During the neurogenic transition, represses selective NOTCH1-target genes through histone deacetylation in a BCL6-dependent manner and leading to neuronal differentiation. Regulates the circadian expression of several core clock genes, including BMAL1, RORC, PER2 and CRY1 and plays a critical role in maintaining a controlled rhythmicity in histone acetylation, thereby contributing to circadian chromatin remodeling. Deacetylates BMAL1 and histones at the circadian gene promoters in order to facilitate repression by inhibitory components of the circadian oscillator. Deacetylates PER2, facilitating its ubiquitination and degradation by the proteasome. Protects cardiomyocytes against palmitate-induced apoptosis. Deacetylates XBP1 isoform 2; deacetylation decreases protein stability of XBP1 isoform 2 and inhibits its transcriptional activity. Deacetylates PCK1 and directs its activity toward phosphoenolpyruvate production promoting gluconeogenesis. Involved in the CCAR2-mediated regulation of PCK1 and NR1D1. Deacetylates CTNB1 at 'Lys-49'. In POMC (pro-opiomelanocortin) neurons, required for leptin-induced activation of PI3K signaling. Deacetylates SOX9; promoting SOX9 nuclear localization and transactivation activity. Involved in the regulation of centrosome duplication: deacetylates CENATAC in G1 phase, allowing for SASS6 accumulation on the centrosome and subsequent procentriole assembly. Deacetylates NDC80/HEC1. In addition to protein deacetylase activity, also acts as a protein-lysine deacylase by mediating protein delactylation, depropionylation and decrotonylation. Mediates depropionylation of Osterix (SP7). Catalyzes decrotonylation of histones; it however does not represent a major histone decrotonylase. Mediates protein delactylation of TEAD1 and YAP1. Functionally, deacetylates 'Lys-382' of p53/TP53, however with lower activity than isoform 1. In combination, the two isoforms exert an additive effect. Isoform 2 regulates p53/TP53 expression and cellular stress response and is in turn repressed by p53/TP53 presenting a SIRT1 isoform-dependent auto-regulatory loop. In terms of biological role, catalytically inactive 75SirT1 may be involved in regulation of apoptosis. May be involved in protecting chondrocytes from apoptotic death by associating with cytochrome C and interfering with apoptosome assembly. Its function is as follows. (Microbial infection) In case of HIV-1 infection, interacts with and deacetylates the viral Tat protein. The viral Tat protein inhibits SIRT1 deacetylation activity toward RELA/NF-kappa-B p65, thereby potentiates its transcriptional activity and SIRT1 is proposed to contribute to T-cell hyperactivation during infection. The polypeptide is NAD-dependent protein deacetylase sirtuin-1 (Homo sapiens (Human)).